The primary structure comprises 197 residues: Imidazoleglycerol-phosphate dehydratase (197 aa).

Belongs to the imidazoleglycerol-phosphate dehydratase family.

Its subcellular location is the cytoplasm. It carries out the reaction D-erythro-1-(imidazol-4-yl)glycerol 3-phosphate = 3-(imidazol-4-yl)-2-oxopropyl phosphate + H2O. It participates in amino-acid biosynthesis; L-histidine biosynthesis; L-histidine from 5-phospho-alpha-D-ribose 1-diphosphate: step 6/9. This chain is Imidazoleglycerol-phosphate dehydratase, found in Alkalilimnicola ehrlichii (strain ATCC BAA-1101 / DSM 17681 / MLHE-1).